Here is a 229-residue protein sequence, read N- to C-terminus: Heptaprenylglyceryl phosphate synthase (229 aa).

Lysine 12 contributes to the sn-glycerol 1-phosphate binding site. Mg(2+)-binding residues include aspartate 14 and serine 40. Sn-glycerol 1-phosphate contacts are provided by residues tyrosine 159–glycine 164, glycine 189, and glycine 209–asparagine 210.

This sequence belongs to the GGGP/HepGP synthase family. Group I subfamily. As to quaternary structure, homodimer. Mg(2+) serves as cofactor.

It carries out the reaction sn-glycerol 1-phosphate + all-trans-heptaprenyl diphosphate = 3-heptaprenyl-sn-glycero-1-phosphate + diphosphate. It participates in membrane lipid metabolism; glycerophospholipid metabolism. Functionally, prenyltransferase that catalyzes in vivo the transfer of the heptaprenyl moiety of heptaprenyl pyrophosphate (HepPP; 35 carbon atoms) to the C3 hydroxyl of sn-glycerol-1-phosphate (G1P), producing heptaprenylglyceryl phosphate (HepGP). This reaction is an ether-bond-formation step in the biosynthesis of archaea-type G1P-based membrane lipids found in Bacillales. This chain is Heptaprenylglyceryl phosphate synthase, found in Bacillus thuringiensis (strain Al Hakam).